Consider the following 484-residue polypeptide: Auxin transporter-like protein 2 (484 aa).

Residues 1–59 are Cytoplasmic-facing; sequence MLPQKQGEEAIVSSFNETDQQEGVVGREEEVEDHSFSVKNFLWHGGSVWDAWFSCASNQ. The chain crosses the membrane as a helical span at residues 60 to 77; it reads VAQVLLTLPYSFSQLGML. Topologically, residues 78-79 are extracellular; sequence SG. The helical transmembrane segment at 80–100 threads the bilayer; that stretch reads ILLQVFYGILGSWTAYLISVL. Topologically, residues 101–135 are cytoplasmic; sequence YVEYRSRKEKENVNFKNHVIQWFEVLDGLLGPYWK. A helical membrane pass occupies residues 136–156; the sequence is ALGLAFNCTFLLFGSVIQLIA. Over 157 to 172 the chain is Extracellular; sequence CASNIYYINDNLDKRT. A helical transmembrane segment spans residues 173–193; sequence WTYIFGACCATTVFIPSFHNY. Topologically, residues 194–196 are cytoplasmic; sequence RIW. A helical transmembrane segment spans residues 197–217; it reads SFLGLGMTTYTAWYLTIASIV. The Extracellular portion of the chain corresponds to 218–232; sequence HGQAENVTHTGPKKL. The N-linked (GlcNAc...) asparagine glycan is linked to Asn-223. Residues 233 to 253 form a helical membrane-spanning segment; the sequence is VLYFTGATNILYTFGGHAVTV. Topologically, residues 254–266 are cytoplasmic; it reads EIMHAMWKPQKFK. A helical membrane pass occupies residues 267–287; it reads YIYLMATLYVFTLTIPSATAV. Topologically, residues 288 to 314 are extracellular; sequence YWAFGDELLNHSNAFSLLPKNGWRDGA. Asn-297 carries N-linked (GlcNAc...) asparagine glycosylation. A helical transmembrane segment spans residues 315 to 335; that stretch reads VILMLIHQFITFGFACTPLYF. Topologically, residues 336-356 are cytoplasmic; the sequence is VWEKVIGMHDTRSICLRALAR. Residues 357 to 377 form a helical membrane-spanning segment; it reads LPVVIPIWFLAIIFPFFGPIN. Residue Ser-378 is a topological domain, extracellular. The chain crosses the membrane as a helical span at residues 379 to 399; sequence AVGALLVSFTVYIIPSAAHML. Topologically, residues 400–425 are cytoplasmic; it reads TYRKASARKNAAEKPPFFMPSWTAMY. The helical transmembrane segment at 426-446 threads the bilayer; the sequence is IFNAFIVIWVLVVGFGFGGWA. At 447 to 484 the chain is on the extracellular side; the sequence is SMTNFIRQIDTFGLFAKCYQCKPPPVMAAAPPPHALHH.

Belongs to the amino acid/polyamine transporter 2 family. Amino acid/auxin permease (AAAP) (TC 2.A.18.1) subfamily. In terms of tissue distribution, shoots and roots of nodulating plants. Higher levels in roots, flowers and stems, lower in nodules, leaves, petioles and shoot apices.

Its subcellular location is the cell membrane. Carrier protein involved in proton-driven auxin influx. Mediates the formation of auxin gradient from developing leaves (site of auxin biosynthesis) to tips by contributing to the loading of auxin in vascular tissues and facilitating acropetal (base to tip) auxin transport within inner tissues of the root apex, and basipetal (tip to base) auxin transport within outer tissues of the root apex. May be involved in lateral roots and nodules formation. This Medicago truncatula (Barrel medic) protein is Auxin transporter-like protein 2 (LAX2).